A 71-amino-acid chain; its full sequence is Pseudonajatoxin b (71 aa).

Disulfide bonds link cysteine 3/cysteine 21, cysteine 14/cysteine 42, cysteine 27/cysteine 31, cysteine 46/cysteine 58, and cysteine 59/cysteine 64.

Belongs to the three-finger toxin family. Long-chain subfamily. Type II alpha-neurotoxin sub-subfamily. Expressed by the venom gland.

It is found in the secreted. In terms of biological role, binds with high affinity to muscular (alpha-1/CHRNA1) and neuronal (alpha-7/CHRNA7) nicotinic acetylcholine receptor (nAChR) and inhibits acetylcholine from binding to the receptor, thereby impairing neuromuscular and neuronal transmission. This Pseudonaja textilis (Eastern brown snake) protein is Pseudonajatoxin b.